Here is a 189-residue protein sequence, read N- to C-terminus: Leucine repeat adapter protein 25 (189 aa).

The residue at position 28 (S28) is a Phosphoserine. The segment at 54-82 is disordered; it reads ELSRAARAPDGPRHAAGSANSGSAAGPRR. The span at 68–79 shows a compositional bias: low complexity; that stretch reads AAGSANSGSAAG. One copy of the LRR repeat lies at 86–114; the sequence is LDSALAALRKEMVGLRQLDMSLLCQLWGL. A disordered region spans residues 136 to 175; that stretch reads SSLHSDSSYPPDAGLSDDEEPPDASLPPDPPPLTVPQTHN. Positions 159-169 are enriched in pro residues; sequence ASLPPDPPPLT. S188 bears the Phosphoserine mark.

The protein belongs to the FAM89 family. In terms of assembly, interacts with SKI. Interacts (via LRR repeat) with CDC42BPA (via AGC-kinase C-terminal domain), CDC42BPB (via AGC-kinase C-terminal domain) and LIMK1 (via LIM zinc-binding domains). Forms a tripartite complex with CDC42BPA, CDC42BPB and LIMK1. As to quaternary structure, (Microbial infection) Interacts with mouse mammary tumor virus (MMTV) envelope glycoprotein gp70. Widely expressed. Expressed in the early postnatal brain.

It localises to the cytoplasm. Its subcellular location is the cell projection. The protein localises to the lamellipodium. The protein resides in the cell surface. Functionally, negatively regulates TGF-beta-induced signaling; in cooperation with SKI prevents the translocation of SMAD2 from the nucleus to the cytoplasm in response to TGF-beta. Acts as an adapter that mediates the specific recognition of LIMK1 by CDC42BPA and CDC42BPB in the lamellipodia. LRAP25-mediated CDC42BPA/CDC42BPB targeting to LIMK1 and the lamellipodium results in LIMK1 activation and the subsequent phosphorylation of CFL1 which is important for lamellipodial F-actin regulation. Its function is as follows. (Microbial infection) May be a receptor for mouse mammary tumor virus (MMTV). This Mus musculus (Mouse) protein is Leucine repeat adapter protein 25.